The following is a 955-amino-acid chain: Coiled-coil domain-containing protein 146 (955 aa).

A compositionally biased stretch (acidic residues) spans 1 to 17 (MEDSSTDTEKEEEEEKD). The segment at 1–22 (MEDSSTDTEKEEEEEKDEKDQE) is disordered. Coiled-coil stretches lie at residues 114–141 (EAFSTEVSKMREQLLKYQNEYNAVKERE), 169–321 (GEME…AREN), 400–461 (STLS…LLRM), 534–640 (KAHQ…RNES), and 667–832 (NGEI…MKQA).

As to quaternary structure, interacts with CCDC38 and CCDC42. Interacts with intraflagellar transport proteins IFT20 and IFT88. In terms of assembly, (Microbial infection) Interacts with Chlamydia trachomatis incM/YT288. In host cells infected with C.trachomatis incM, CCDC146 is recruited to the periphery of the pathogen-containing vacuole but recruitment is not dependent on incM. In terms of tissue distribution, widely expressed.

The protein localises to the cytoplasm. Its subcellular location is the cytoskeleton. It is found in the microtubule organizing center. The protein resides in the centrosome. It localises to the centriole. The protein localises to the flagellum axoneme. Its subcellular location is the cilium basal body. It is found in the midbody. Functionally, essential for sperm flagellum biogenesis and male fertility. The protein is Coiled-coil domain-containing protein 146 (CCDC146) of Homo sapiens (Human).